The sequence spans 343 residues: Heat-inducible transcription repressor HrcA (343 aa).

Belongs to the HrcA family.

In terms of biological role, negative regulator of class I heat shock genes (grpE-dnaK-dnaJ and groELS operons). Prevents heat-shock induction of these operons. This chain is Heat-inducible transcription repressor HrcA, found in Clostridium acetobutylicum (strain ATCC 824 / DSM 792 / JCM 1419 / IAM 19013 / LMG 5710 / NBRC 13948 / NRRL B-527 / VKM B-1787 / 2291 / W).